We begin with the raw amino-acid sequence, 311 residues long: Methionyl-tRNA formyltransferase (311 aa).

Serine 112–proline 115 is a (6S)-5,6,7,8-tetrahydrofolate binding site.

It belongs to the Fmt family.

It catalyses the reaction L-methionyl-tRNA(fMet) + (6R)-10-formyltetrahydrofolate = N-formyl-L-methionyl-tRNA(fMet) + (6S)-5,6,7,8-tetrahydrofolate + H(+). Its function is as follows. Attaches a formyl group to the free amino group of methionyl-tRNA(fMet). The formyl group appears to play a dual role in the initiator identity of N-formylmethionyl-tRNA by promoting its recognition by IF2 and preventing the misappropriation of this tRNA by the elongation apparatus. This is Methionyl-tRNA formyltransferase from Sinorhizobium medicae (strain WSM419) (Ensifer medicae).